Reading from the N-terminus, the 158-residue chain is Small ribosomal subunit protein uS7 (158 aa).

It belongs to the universal ribosomal protein uS7 family. In terms of assembly, part of the 30S ribosomal subunit. Contacts proteins S9 and S11.

In terms of biological role, one of the primary rRNA binding proteins, it binds directly to 16S rRNA where it nucleates assembly of the head domain of the 30S subunit. Is located at the subunit interface close to the decoding center, probably blocks exit of the E-site tRNA. This is Small ribosomal subunit protein uS7 from Porphyromonas gingivalis (strain ATCC BAA-308 / W83).